The following is a 483-amino-acid chain: Regulatory protein ViaA (483 aa).

Belongs to the ViaA family. In terms of assembly, homodimer. Interacts with RavA.

Its subcellular location is the cytoplasm. Functionally, component of the RavA-ViaA chaperone complex, which may act on the membrane to optimize the function of some of the respiratory chains. ViaA stimulates the ATPase activity of RavA. The protein is Regulatory protein ViaA of Salmonella schwarzengrund (strain CVM19633).